Here is a 65-residue protein sequence, read N- to C-terminus: Protein translocase subunit SecE (65 aa).

Over 1–27 the chain is Cytoplasmic; the sequence is MEKLKEFLKGVRDELKRVVWPSRELVV. The chain crosses the membrane as a helical span at residues 28-59; it reads KATISVIIFSLAIGVYLWILDLTFTKIISFIL. Topologically, residues 60-65 are periplasmic; it reads SLRGSL.

This sequence belongs to the SecE/SEC61-gamma family. As to quaternary structure, component of the Sec protein translocase complex. Heterotrimer consisting of SecY, SecE and SecG subunits. The heterotrimers can form oligomers, although 1 heterotrimer is thought to be able to translocate proteins. Interacts with SecDF, and other proteins may be involved. The channel interacts with SecA via subunit SecY.

The protein resides in the cell inner membrane. In terms of biological role, essential subunit of the protein translocation channel SecYEG. Clamps together the 2 halves of SecY. May contact the channel plug during translocation. The protein is Protein translocase subunit SecE of Aquifex aeolicus (strain VF5).